The sequence spans 202 residues: Holliday junction resolvase RecU (202 aa).

Mg(2+) is bound by residues T85, D87, E100, and Q119.

The protein belongs to the RecU family. Requires Mg(2+) as cofactor.

Its subcellular location is the cytoplasm. It carries out the reaction Endonucleolytic cleavage at a junction such as a reciprocal single-stranded crossover between two homologous DNA duplexes (Holliday junction).. Functionally, endonuclease that resolves Holliday junction intermediates in genetic recombination. Cleaves mobile four-strand junctions by introducing symmetrical nicks in paired strands. Promotes annealing of linear ssDNA with homologous dsDNA. Required for DNA repair, homologous recombination and chromosome segregation. This Streptococcus pyogenes serotype M6 (strain ATCC BAA-946 / MGAS10394) protein is Holliday junction resolvase RecU.